The sequence spans 373 residues: tRNA-specific 2-thiouridylase MnmA (373 aa).

ATP is bound by residues 12-19 and M38; that span reads GMSGGVDS. The interaction with target base in tRNA stretch occupies residues 98–100; that stretch reads NPD. C103 functions as the Nucleophile in the catalytic mechanism. The cysteines at positions 103 and 200 are disulfide-linked. Residue G127 coordinates ATP. The tract at residues 150 to 152 is interaction with tRNA; it reads KDQ. C200 acts as the Cysteine persulfide intermediate in catalysis. The interval 312–313 is interaction with tRNA; the sequence is RY.

It belongs to the MnmA/TRMU family.

It localises to the cytoplasm. It carries out the reaction S-sulfanyl-L-cysteinyl-[protein] + uridine(34) in tRNA + AH2 + ATP = 2-thiouridine(34) in tRNA + L-cysteinyl-[protein] + A + AMP + diphosphate + H(+). Functionally, catalyzes the 2-thiolation of uridine at the wobble position (U34) of tRNA, leading to the formation of s(2)U34. This chain is tRNA-specific 2-thiouridylase MnmA, found in Streptococcus pneumoniae (strain JJA).